Here is a 419-residue protein sequence, read N- to C-terminus: L-rhamnose isomerase (419 aa).

Residues His262, Asp294, and Asp296 each contribute to the Mn(2+) site.

Belongs to the rhamnose isomerase family. As to quaternary structure, homotetramer. Mn(2+) is required as a cofactor.

Its subcellular location is the cytoplasm. It carries out the reaction L-rhamnopyranose = L-rhamnulose. The protein operates within carbohydrate degradation; L-rhamnose degradation; glycerone phosphate from L-rhamnose: step 1/3. Functionally, catalyzes the interconversion of L-rhamnose and L-rhamnulose. The protein is L-rhamnose isomerase of Shigella boydii serotype 4 (strain Sb227).